We begin with the raw amino-acid sequence, 305 residues long: Methionyl-tRNA formyltransferase (305 aa).

(6S)-5,6,7,8-tetrahydrofolate is bound at residue 108-111; the sequence is SLLP.

Belongs to the Fmt family.

The enzyme catalyses L-methionyl-tRNA(fMet) + (6R)-10-formyltetrahydrofolate = N-formyl-L-methionyl-tRNA(fMet) + (6S)-5,6,7,8-tetrahydrofolate + H(+). In terms of biological role, attaches a formyl group to the free amino group of methionyl-tRNA(fMet). The formyl group appears to play a dual role in the initiator identity of N-formylmethionyl-tRNA by promoting its recognition by IF2 and preventing the misappropriation of this tRNA by the elongation apparatus. The polypeptide is Methionyl-tRNA formyltransferase (Clavibacter michiganensis subsp. michiganensis (strain NCPPB 382)).